The sequence spans 547 residues: CTP synthase (547 aa).

Residues 1-267 are amidoligase domain; it reads MKTKFIFITG…DQKIAIMLRL (267 aa). Position 14 (serine 14) interacts with CTP. Serine 14 provides a ligand contact to UTP. ATP contacts are provided by residues 15-20 and aspartate 72; that span reads SLGKGL. Aspartate 72 and glutamate 141 together coordinate Mg(2+). CTP-binding positions include 148–150, 188–193, and lysine 224; these read DIE and KTKPTQ. Residues 188-193 and lysine 224 each bind UTP; that span reads KTKPTQ. The Glutamine amidotransferase type-1 domain maps to 292-545; the sequence is TIGIVGKYVD…IRAAKTHPAG (254 aa). Glycine 354 is a binding site for L-glutamine. Cysteine 381 functions as the Nucleophile; for glutamine hydrolysis in the catalytic mechanism. Residues 382–385, glutamate 405, and arginine 473 each bind L-glutamine; that span reads LGMQ. Residues histidine 518 and glutamate 520 contribute to the active site.

The protein belongs to the CTP synthase family. As to quaternary structure, homotetramer.

It catalyses the reaction UTP + L-glutamine + ATP + H2O = CTP + L-glutamate + ADP + phosphate + 2 H(+). The enzyme catalyses L-glutamine + H2O = L-glutamate + NH4(+). The catalysed reaction is UTP + NH4(+) + ATP = CTP + ADP + phosphate + 2 H(+). Its pathway is pyrimidine metabolism; CTP biosynthesis via de novo pathway; CTP from UDP: step 2/2. Its activity is regulated as follows. Allosterically activated by GTP, when glutamine is the substrate; GTP has no effect on the reaction when ammonia is the substrate. The allosteric effector GTP functions by stabilizing the protein conformation that binds the tetrahedral intermediate(s) formed during glutamine hydrolysis. Inhibited by the product CTP, via allosteric rather than competitive inhibition. In terms of biological role, catalyzes the ATP-dependent amination of UTP to CTP with either L-glutamine or ammonia as the source of nitrogen. Regulates intracellular CTP levels through interactions with the four ribonucleotide triphosphates. This Nitratidesulfovibrio vulgaris (strain DP4) (Desulfovibrio vulgaris) protein is CTP synthase.